Reading from the N-terminus, the 130-residue chain is Cytochrome c oxidase subunit 13, mitochondrial (130 aa).

The transit peptide at 1 to 31 (MSMMNRNIGFLSRTLKTSVPKRAGLLSFRAY) directs the protein to the mitochondrion. Residues 32 to 61 (SNEAKVNWLEEVQAEEEHAKRSSEFWKKVT) are Mitochondrial matrix-facing. A helical membrane pass occupies residues 62–80 (YYIGGPALILASANAYYIY). Residues 81-130 (CKHQEHAKHVEDTDPGYSFENLRFKKYPWGDGSKTLFWNDKVNHLKKDDE) lie on the Mitochondrial intermembrane side of the membrane.

This sequence belongs to the cytochrome c oxidase subunit 6A family. As to quaternary structure, component of the cytochrome c oxidase (complex IV, CIV), a multisubunit enzyme composed of a catalytic core of 3 subunits and several supernumerary subunits. The complex exists as a monomer or a dimer and forms supercomplexes (SCs) in the inner mitochondrial membrane with ubiquinol-cytochrome c oxidoreductase (cytochrome b-c1 complex, complex III, CIII).

It is found in the mitochondrion inner membrane. The protein operates within energy metabolism; oxidative phosphorylation. Functionally, component of the cytochrome c oxidase, the last enzyme in the mitochondrial electron transport chain which drives oxidative phosphorylation. The respiratory chain contains 3 multisubunit complexes succinate dehydrogenase (complex II, CII), ubiquinol-cytochrome c oxidoreductase (cytochrome b-c1 complex, complex III, CIII) and cytochrome c oxidase (complex IV, CIV), that cooperate to transfer electrons derived from NADH and succinate to molecular oxygen, creating an electrochemical gradient over the inner membrane that drives transmembrane transport and the ATP synthase. Cytochrome c oxidase is the component of the respiratory chain that catalyzes the reduction of oxygen to water. Electrons originating from reduced cytochrome c in the intermembrane space (IMS) are transferred via the dinuclear copper A center (CU(A)) of subunit 2 and heme A of subunit 1 to the active site in subunit 1, a binuclear center (BNC) formed by heme A3 and copper B (CU(B)). The BNC reduces molecular oxygen to 2 water molecules unsing 4 electrons from cytochrome c in the IMS and 4 protons from the mitochondrial matrix. This is Cytochrome c oxidase subunit 13, mitochondrial (cox13) from Schizosaccharomyces pombe (strain 972 / ATCC 24843) (Fission yeast).